A 365-amino-acid polypeptide reads, in one-letter code: Endophilin-B1 (365 aa).

At Met1 the chain carries N-acetylmethionine. Residues 1-30 (MNIMDFNVKKLAADAGTFLSRAVQFTEEKL) are membrane-binding amphipathic helix. The interval 1–37 (MNIMDFNVKKLAADAGTFLSRAVQFTEEKLGQAEKTE) is required for membrane binding. Residues 27–261 (EEKLGQAEKT…LGSFPSNYHS (235 aa)) form the BAR domain. Thr145 carries the phosphothreonine; by CDK5 modification. Positions 155 to 195 (YKTIAKERKLLQNKRLDLDAAKTRLKKAKAAETRASSEQEL) form a coiled coil. The 61-residue stretch at 305 to 365 (GGSRRARVLY…VPITYLELLN (61 aa)) folds into the SH3 domain.

It belongs to the endophilin family. In terms of assembly, homodimer, and heterodimer with SH3GLB2. Binds BAX; induction of apoptosis augments BAX binding. Binds DNM1, HTT, AMPH, BIN1 and ARFGAP1. Interacts with UVRAG; UVRAG bridges the interaction to BECN1 indicative for an association with the PI3K complex II (PI3KC3-C2). Post-translationally, phosphorylated at Thr-145 by CDK5; this phosphorylation is required for autophagy induction in starved neurons and facilitates homodimerization.

Its subcellular location is the cytoplasm. The protein resides in the golgi apparatus membrane. It localises to the mitochondrion outer membrane. The protein localises to the cytoplasmic vesicle. It is found in the autophagosome membrane. Its subcellular location is the midbody. Its function is as follows. May be required for normal outer mitochondrial membrane dynamics. Required for coatomer-mediated retrograde transport in certain cells. May recruit other proteins to membranes with high curvature. May promote membrane fusion. Involved in activation of caspase-dependent apoptosis by promoting BAX/BAK1 activation. Involved in caspase-independent apoptosis during nutrition starvation and involved in the regulation of autophagy. Activates lipid kinase activity of PIK3C3 during autophagy probably by associating with the PI3K complex II (PI3KC3-C2). Associated with PI3KC3-C2 during autophagy may regulate the trafficking of ATG9A from the Golgi complex to the peripheral cytoplasm for the formation of autophagosomes by inducing Golgi membrane tubulation and fragmentation. Involved in regulation of degradative endocytic trafficking and cytokinesis, probably in the context of PI3KC3-C2. This chain is Endophilin-B1 (SH3GLB1), found in Bos taurus (Bovine).